The primary structure comprises 506 residues: Cobyric acid synthase (506 aa).

The 198-residue stretch at 251–448 folds into the GATase cobBQ-type domain; the sequence is DITIAIVQLP…LHGLFDSDAF (198 aa). Cys332 (nucleophile) is an active-site residue. His440 is a catalytic residue.

It belongs to the CobB/CobQ family. CobQ subfamily.

It functions in the pathway cofactor biosynthesis; adenosylcobalamin biosynthesis. Its function is as follows. Catalyzes amidations at positions B, D, E, and G on adenosylcobyrinic A,C-diamide. NH(2) groups are provided by glutamine, and one molecule of ATP is hydrogenolyzed for each amidation. This chain is Cobyric acid synthase, found in Salmonella arizonae (strain ATCC BAA-731 / CDC346-86 / RSK2980).